The chain runs to 248 residues: 1-(5-phosphoribosyl)-5-[(5-phosphoribosylamino)methylideneamino] imidazole-4-carboxamide isomerase (248 aa).

The active-site Proton acceptor is Asp-8. Asp-129 functions as the Proton donor in the catalytic mechanism.

This sequence belongs to the HisA/HisF family.

Its subcellular location is the cytoplasm. The enzyme catalyses 1-(5-phospho-beta-D-ribosyl)-5-[(5-phospho-beta-D-ribosylamino)methylideneamino]imidazole-4-carboxamide = 5-[(5-phospho-1-deoxy-D-ribulos-1-ylimino)methylamino]-1-(5-phospho-beta-D-ribosyl)imidazole-4-carboxamide. It participates in amino-acid biosynthesis; L-histidine biosynthesis; L-histidine from 5-phospho-alpha-D-ribose 1-diphosphate: step 4/9. The sequence is that of 1-(5-phosphoribosyl)-5-[(5-phosphoribosylamino)methylideneamino] imidazole-4-carboxamide isomerase from Desulfitobacterium hafniense (strain Y51).